Here is a 309-residue protein sequence, read N- to C-terminus: Short chain dehydrogenase MYCFIDRAFT_6125 (309 aa).

Ile43, Arg67, Asp88, and Arg150 together coordinate NADP(+). The active-site Proton donor is the Ser168. NADP(+) contacts are provided by Tyr182, Lys186, Val215, and Ser217. Tyr182 functions as the Proton acceptor in the catalytic mechanism. Catalysis depends on Lys186, which acts as the Lowers pKa of active site Tyr.

Belongs to the short-chain dehydrogenases/reductases (SDR) family.

It participates in secondary metabolite biosynthesis. Its function is as follows. Short chain dehydrogenase; part of the gene cluster that mediates the biosynthesis of an emodin derivative that may be involved in black Sigatoka disease of banana. The pathway begins with the synthesis of atrochrysone thioester by the polyketide synthase PKS8-1. The atrochrysone carboxyl ACP thioesterase MYCFIDRAFT_190111 then breaks the thioester bond and releases the atrochrysone carboxylic acid from PKS8-1. The decarboxylase MYCFIDRAFT_34057 then catalyzes the concerted decarboxylation-elimination required to convert atochrysone carboxylic acid into emodin anthrone, which is further oxidized to emodin by the anthrone oxygenase MYCFIDRAFT_34418. The functions of the other tailoring enzymes as well as the final product of the cluster have still to be identified. The sequence is that of Short chain dehydrogenase MYCFIDRAFT_6125 from Pseudocercospora fijiensis (strain CIRAD86) (Black leaf streak disease fungus).